The sequence spans 205 residues: MINQLSALLKTAGISLSDRQKQQLVGYVEMLHKWNKAYNLTSVRDPQQMLVRHILDSIVVEPHLIGERFIDVGTGPGLPGVPLAIVRPGAHFTLLDSLGKRVRFLKQVQHELKLDNITPVQSRVEEFAGEPPFDGVISRAFASLNDMVSWCHHLPGQQGRFYALKGVLPEEEIAALPAGFRVENISPLIVPQLEGERHLVVIARH.

S-adenosyl-L-methionine-binding positions include Gly73, Leu78, 124 to 125, and Arg139; that span reads VE.

Belongs to the methyltransferase superfamily. RNA methyltransferase RsmG family.

It is found in the cytoplasm. The enzyme catalyses guanosine(527) in 16S rRNA + S-adenosyl-L-methionine = N(7)-methylguanosine(527) in 16S rRNA + S-adenosyl-L-homocysteine. Its function is as follows. Specifically methylates the N7 position of guanine in position 527 of 16S rRNA. The polypeptide is Ribosomal RNA small subunit methyltransferase G (Erwinia tasmaniensis (strain DSM 17950 / CFBP 7177 / CIP 109463 / NCPPB 4357 / Et1/99)).